The chain runs to 454 residues: Tubulin gamma chain (454 aa).

Residue 142 to 148 (AGGTGSG) coordinates GTP.

It belongs to the tubulin family.

It localises to the cytoplasm. Its subcellular location is the cytoskeleton. The protein localises to the microtubule organizing center. The protein resides in the spindle pole body. Its function is as follows. Tubulin is the major constituent of microtubules. The gamma chain is found at microtubule organizing centers (MTOC) such as the spindle pole or the centrosome, suggesting that it is involved in the minus-end nucleation of microtubule assembly. Interacts physically with beta-tubulin and is involved in microtubule function. The chain is Tubulin gamma chain (mipA) from Emericella nidulans (strain FGSC A4 / ATCC 38163 / CBS 112.46 / NRRL 194 / M139) (Aspergillus nidulans).